A 978-amino-acid chain; its full sequence is Glycine dehydrogenase (decarboxylating) (978 aa).

Lys-726 is modified (N6-(pyridoxal phosphate)lysine).

It belongs to the GcvP family. As to quaternary structure, the glycine cleavage system is composed of four proteins: P, T, L and H. It depends on pyridoxal 5'-phosphate as a cofactor.

The catalysed reaction is N(6)-[(R)-lipoyl]-L-lysyl-[glycine-cleavage complex H protein] + glycine + H(+) = N(6)-[(R)-S(8)-aminomethyldihydrolipoyl]-L-lysyl-[glycine-cleavage complex H protein] + CO2. The glycine cleavage system catalyzes the degradation of glycine. The P protein binds the alpha-amino group of glycine through its pyridoxal phosphate cofactor; CO(2) is released and the remaining methylamine moiety is then transferred to the lipoamide cofactor of the H protein. The polypeptide is Glycine dehydrogenase (decarboxylating) (Paraburkholderia phytofirmans (strain DSM 17436 / LMG 22146 / PsJN) (Burkholderia phytofirmans)).